The chain runs to 420 residues: Serine--tRNA ligase (420 aa).

229–231 (TAE) contributes to the L-serine binding site. 260-262 (RAE) lines the ATP pocket. L-serine is bound at residue E283. 347–350 (EISS) serves as a coordination point for ATP. Residue S382 coordinates L-serine.

It belongs to the class-II aminoacyl-tRNA synthetase family. Type-1 seryl-tRNA synthetase subfamily. Homodimer. The tRNA molecule binds across the dimer.

It localises to the cytoplasm. The enzyme catalyses tRNA(Ser) + L-serine + ATP = L-seryl-tRNA(Ser) + AMP + diphosphate + H(+). It carries out the reaction tRNA(Sec) + L-serine + ATP = L-seryl-tRNA(Sec) + AMP + diphosphate + H(+). Its pathway is aminoacyl-tRNA biosynthesis; selenocysteinyl-tRNA(Sec) biosynthesis; L-seryl-tRNA(Sec) from L-serine and tRNA(Sec): step 1/1. In terms of biological role, catalyzes the attachment of serine to tRNA(Ser). Is also able to aminoacylate tRNA(Sec) with serine, to form the misacylated tRNA L-seryl-tRNA(Sec), which will be further converted into selenocysteinyl-tRNA(Sec). The sequence is that of Serine--tRNA ligase from Caldicellulosiruptor saccharolyticus (strain ATCC 43494 / DSM 8903 / Tp8T 6331).